A 126-amino-acid chain; its full sequence is Fluoride-specific ion channel FluC (126 aa).

Transmembrane regions (helical) follow at residues 3 to 23, 37 to 57, 68 to 88, and 101 to 121; these read PYLL…RFLI, VGTL…ALYF, LVIT…LETV, and TNIT…MMLF. Gly75 and Thr78 together coordinate Na(+).

It belongs to the fluoride channel Fluc/FEX (TC 1.A.43) family.

The protein localises to the cell inner membrane. The enzyme catalyses fluoride(in) = fluoride(out). With respect to regulation, na(+) is not transported, but it plays an essential structural role and its presence is essential for fluoride channel function. Functionally, fluoride-specific ion channel. Important for reducing fluoride concentration in the cell, thus reducing its toxicity. The protein is Fluoride-specific ion channel FluC of Sulfurovum sp. (strain NBC37-1).